The sequence spans 256 residues: V-type proton ATPase subunit D (256 aa).

A compositionally biased stretch (basic and acidic residues) spans 211 to 230; sequence QNETAKLDAEMKLKRDRAEQ. The interval 211 to 256 is disordered; that stretch reads QNETAKLDAEMKLKRDRAEQDASEVAADEEPQGETLVADQEDDVIF.

It belongs to the V-ATPase D subunit family. V-ATPase is a heteromultimeric enzyme composed of a peripheral catalytic V1 complex (components A to H) attached to an integral membrane V0 proton pore complex (components: a, c, c', c'', d, e, f and VOA1). Interacts with RAV1 and RAV2 components of the RAVE complex, which are essential for the stability and assembly of V-ATPase.

Its subcellular location is the vacuole membrane. Its function is as follows. Subunit of the V1 complex of vacuolar(H+)-ATPase (V-ATPase), a multisubunit enzyme composed of a peripheral complex (V1) that hydrolyzes ATP and a membrane integral complex (V0) that translocates protons. V-ATPase is responsible for acidifying and maintaining the pH of intracellular compartments. This Saccharomyces cerevisiae (strain ATCC 204508 / S288c) (Baker's yeast) protein is V-type proton ATPase subunit D.